A 997-amino-acid polypeptide reads, in one-letter code: Glutamate [NMDA] receptor subunit 1 (997 aa).

The signal sequence occupies residues 1–26; sequence MAVAGFVFCRPLFGLAIVLLVAPIDA. Residues 27-573 are Extracellular-facing; it reads AQRHTASDNP…TLVSFLQPFS (547 aa). Residues Asn258, Asn314, Asn345, Asn397, Asn454, Asn481, and Asn501 are each glycosylated (N-linked (GlcNAc...) asparagine). Glycine contacts are provided by residues 530–532 and Arg537; that span reads PLT. The chain crosses the membrane as a helical span at residues 574–594; it reads NTLWILVMVSVHVVALVLYLL. Residues 595 to 651 lie on the Cytoplasmic side of the membrane; the sequence is DRFSPFGRFKLSHSDSNEEKALNLSSAVWFAWGVLLNSGIGEGTPRSFSARVLGMVW. Residues 652–672 form a helical membrane-spanning segment; the sequence is AGFAMIIVASYTANLAAFLVL. Topologically, residues 673–831 are extracellular; that stretch reads ERPKTKLSGI…KTPNTLGLKN (159 aa). A glycan (N-linked (GlcNAc...) asparagine) is linked at Asn693. Glycine is bound by residues Ser703 and Asp747. A helical membrane pass occupies residues 832–852; that stretch reads MAGVFILVGVGIAGGVGLIII. At 853-997 the chain is on the cytoplasmic side; the sequence is EVIYKKHQVK…YTSDVSHLVV (145 aa). The interval 970 to 997 is disordered; the sequence is LGKTRPQQSVLPPRYSPGYTSDVSHLVV. Over residues 987–997 the composition is skewed to polar residues; that stretch reads GYTSDVSHLVV.

This sequence belongs to the glutamate-gated ion channel (TC 1.A.10.1) family. In terms of assembly, forms a heteromeric NMDA channel with Nmdar2.

It is found in the cell membrane. Its subcellular location is the postsynaptic cell membrane. It localises to the postsynaptic density. Its function is as follows. NMDA receptor subtype of glutamate-gated ion channels with high calcium permeability and voltage-dependent sensitivity to magnesium. Mediated by glycine. This protein plays a key role in synaptic plasticity, synaptogenesis, excitotoxicity, memory acquisition and learning. It mediates neuronal functions in glutamate neurotransmission. Is involved in the cell surface targeting of NMDA receptors. Plays a role in associative learning and in long-term memory consolidation. This Drosophila sechellia (Fruit fly) protein is Glutamate [NMDA] receptor subunit 1.